Here is a 1949-residue protein sequence, read N- to C-terminus: MGNSYAGQLKTTRFEEVLHNSIEASLRSNNLVPRPIFSQLYLEAEQQLAALEGGSRVDNEEEEEEGEGGLETNGPPNPFQLHPLPEGCCTTDGFCQAGKDLRLVSISNEPMDVPAGFLLVGVKSPSLPDHLLVCAVDKRFLPDDNGHNALLGFSGNCVGCGKKGFCYFTEFSNHINLKLTTQPKKQKHLKYYLVRNAQGTLTKGPLICWKGSEFRSRQIPASTCSSSLFPALESTAAFPSEPVPGTNPSILMGAQQAGPASDHPSLNAAMGPAVFNGKDSPKCQQLAKNNLLALPRPSALGILSNSGPPKKRHKGWSPESPSAPDGGCPQGGGNRAKYESAGMSCVPQVGLVGPASVTFPVVASGEPVSVPDNLLKICKAKPVIFKGHGNFPYLCGNLNDVVVSPLLYTCYQNSQSVSRAYEQYGASAIQPISEEMQLLLTVYYLVQLAADQVPLMEDLEQIFLRSWRESHLTEIRQYQQAPPQPFPPAPSAAAPVTSAQLPWLASLAASSCNDSVHVIECAYSLAEGLSEMFRLLVEGKLAKTNYVVIICACRSAAIDSCIAVTGKYQARILSESLLTPAEYQKEVNYELVTGKVDSLGAFFSTLCPEGDIDILLDKFHQENQGHISSSLAASSVTKAASLDVSGTPVCTSYNLEPHSIRPFQLAVAQKLLSHVCSIADSSTQNLDLGSFEKVDFLICIPPSEVTYQQTLLHVWHSGVLLELGLKKEHMTKQRVEQYVLKLDTEAQTKFKAFLQNSFQNPHTLFVLIHDHAHWDLVSSTVHNLYSQSDPSVGLVDRLLNCREVKEAPNIVTLHVTSFPYALQTQHTLISPYNEIHWPASCSNGVDLYHENKKYFGLSEFIESTLSGHSLPLLRYDSSFEAMVTALGKRFPRLHSAVIRTFVLVQHYAAALMAVSGLPQMKNYTSVETLEITQNLLNSPKQCPCGHGLMVLLRVPCSPLAVVAYERLAHVRARLALEEHFEIILGSPSSGVTVGKHFVKQLRMWQKIEDVEWRPQTYLELEGLPCILIFSGMDPHGESLPRSLRYCDLRLINSSCLVRTALEQELGLAAYFVSNEVPLEKGARNEALESDAEKLSSTDNEDEELGTEGSTSEKRSPMKRERSRSHDSASSSLSSKASGSALGGESSAQPTALPQGEHARSPQPRGPAEEGRAPGEKQRPRASQGPPSAISRHSPGPTPQPDCSLRTGQRSVQVSVTSSCSQLSSSSGSSSSSVAPAAGTWVLQASQCSLTKACRQPPIVFLPKLVYDMVVSTDSSGLPKAASLLPSPSVMWASSFRPLLSKTMTSTEQSLYYRQWTVPRPSHMDYGNRAEGRVDGFHPRRLLLSGPPQIGKTGAYLQFLSVLSRMLVRLTEVDVYDEEEININLREESDWHYLQLSDPWPDLELFKKLPFDYIIHDPKYEDASLICSHYQGIKSEDRGMSRKPEDLYVRRQTARMRLSKYAAYNTYHHCEQCHQYMGFHPRYQLYESTLHAFAFSYSMLGEEIQLHFIIPKSKEHHFVFSQPGGQLESMRLPLVTDKSHEYIKSPTFTPTTGRHEHGLFNLYHAMDGASHLHVLVVKEYEMAIYKKYWPNHIMLVLPSIFNSAGVGAAHFLIKELSYHNLELERNRQEELGIKPQDIWPFIVISDDSCVMWNVVDVNSAGERSREFSWSERNVSLKHIMQHIEAAPDIMHYALLGLRKWSSKTRASEVQEPFSRCHVHNFIILNVDLTQNVQYNQNRFLCDDVDFNLRVHSAGLLLCRFNRFSVMKKQIVVGGHRSFHITSKVSDNSAAVVPAQYICAPDSKHTFLAAPAQLLLEKFLQHHSHLFFPLSLKNHDHPVLSVDCYLNLGSQISVCYVSSRPHSLNISCSDLLFSGLLLYLCDSFVGASFLKKFHFLKGATLCVICQDRSSLRQTVVRLELEDEWQFRLRDEFQTANAREDRPLFFLTGRHI.

Disordered stretches follow at residues Glu52–Asn77, Ile302–Asn334, and Glu1085–Ser1210. The segment covering Asn59–Gly68 has biased composition (acidic residues). 2 stretches are compositionally biased toward basic and acidic residues: residues Glu1085–Ser1095 and Thr1110–Asp1126. Low complexity predominate over residues Ser1127–Ala1147. Residues Pro1166–Arg1178 are compositionally biased toward basic and acidic residues. The chain crosses the membrane as a helical span at residues Asp1868–Leu1888.

The protein belongs to the GREB1 family. In terms of tissue distribution, expressed in proliferating prostatic tissue and prostate cancer.

Its subcellular location is the membrane. In terms of biological role, may play a role in estrogen-stimulated cell proliferation. Acts as a regulator of hormone-dependent cancer growth in breast and prostate cancers. This Homo sapiens (Human) protein is Protein GREB1 (GREB1).